The primary structure comprises 271 residues: Urease accessory protein UreD (271 aa).

It belongs to the UreD family. As to quaternary structure, ureD, UreF and UreG form a complex that acts as a GTP-hydrolysis-dependent molecular chaperone, activating the urease apoprotein by helping to assemble the nickel containing metallocenter of UreC. The UreE protein probably delivers the nickel.

The protein localises to the cytoplasm. Its function is as follows. Required for maturation of urease via the functional incorporation of the urease nickel metallocenter. The protein is Urease accessory protein UreD of Haemophilus influenzae (strain PittEE).